Consider the following 282-residue polypeptide: Transcription factor MYB20 (282 aa).

HTH myb-type domains are found at residues 9-61 (KVGL…TNYL) and 62-116 (RPDL…KKKL). DNA-binding regions (H-T-H motif) lie at residues 37–61 (WRAV…TNYL) and 89–112 (WSKI…NTHI).

In terms of tissue distribution, expressed in chalaza of mature seeds, cotyledons, rosette leaves, cauline leaves, veins of stems, mature siliques, sepals and styles. Expressed at low levels in roots.

The protein resides in the nucleus. Functionally, transcription factor that acts as a positive regulator of abscisic acid (ABA) signaling in response to salt stress. Acts as a negative regulator ABI1, ABI2 and PP2CA, which are protein phosphatases 2C acting as negative regulator of ABA signaling. Binds to the DNA specific sequence and core element 5'-ACGT-3' found in the promoters of ABI1 and PP2CA to negatively regulate their expression during ABA-dependent salt stress response. This chain is Transcription factor MYB20, found in Arabidopsis thaliana (Mouse-ear cress).